A 404-amino-acid polypeptide reads, in one-letter code: MGEHPSPGPAVAACAEAERIEELEPEAEERLPAAPEDHWKVLFDQFDPGNTGYISTGKFRSLLESHSSKLDPHKREVLLALADSHADGQIGYQDFVSLMSNKRSNSFRQAILQGNRRLSSKALLEEKGLSLSQRLIRHVAYETLPREIDRKWYYDSYTCCPPPWFMITVTLLEVAFFLYNGVSLGQFVLQVTHPRYLKNSLVYHPQLRAQVWRYLTYIFMHAGIEHLGLNVVLQLLVGVPLEMVHGATRIGLVYVAGVVAGSLAVSVADMTAPVVGSSGGVYALVSAHLANIVMNWSGMKCQFKLLRMAVALICMSMEFGRAVWLRFHPSAYPPCPHPSFVAHLGGVAVGITLGVVVLRNYEQRLQDQSLWWIFVAMYTVFVLFAVFWNIFAYTLLDLKLPPPP.

2 consecutive EF-hand domains span residues 34–69 and 70–105; these read APEDHWKVLFDQFDPGNTGYISTGKFRSLLESHSSK and LDPHKREVLLALADSHADGQIGYQDFVSLMSNKRSN. The next 7 helical transmembrane spans lie at 164–184, 218–238, 250–270, 274–294, 303–325, 338–358, and 371–391; these read WFMITVTLLEVAFFLYNGVSL, IFMHAGIEHLGLNVVLQLLVG, IGLVYVAGVVAGSLAVSVADM, VVGSSGGVYALVSAHLANIVM, FKLLRMAVALICMSMEFGRAVWL, PSFVAHLGGVAVGITLGVVVL, and WWIFVAMYTVFVLFAVFWNIF. S278 serves as the catalytic Nucleophile. The active site involves H343.

This sequence belongs to the peptidase S54 family.

The protein resides in the membrane. It carries out the reaction Cleaves type-1 transmembrane domains using a catalytic dyad composed of serine and histidine that are contributed by different transmembrane domains.. Its function is as follows. May be involved in regulated intramembrane proteolysis and the subsequent release of functional polypeptides from their membrane anchors. This chain is Rhomboid-related protein 3 (RHBDL3), found in Homo sapiens (Human).